The primary structure comprises 604 residues: MCGIVGVVGNRNATDILMQGLEKLEYRGYDSAGIFVANANQTNLIKSVGRIADLRAKIGIDVAGSTGIGHTRWATHGQSTEDNAHPHTSQTGRFVLVHNGVIENYLHIKTEFLAGHDFKGQTDTEIAVHLIGKFVEEDKLSVLEAFKKSLSIIEGSYAFALMDSQATDTIYVAKNKSPLLIGLGEGYNMVCSDAMAMIRETSEFMEIHDKELVILTKDKVTVTDYDGKELIRDSYTAELDLSDIGKGTYPFYMLKEIDEQPTVMRQLISTYADETGNVQVDPAIITSIQEADRLYILAAGTSYHAGFATKNMLEQLTDTPVELGVASEWGYHMPLLSKKPMFILLSQSGETADSRQVLVKANAMGIPSLTVTNVPGSTLSREATYTMLIHAGPEIAVASTKAYTAQIAALAFLAKAVGEANGKQEALDFNLVHELSLVAQSIEATLSEKDLVAEKVQALLATTRNAFYIGRGNDYYVAMEAALKLKEISYIQCEGFAAGELKHGTISLIEEDTPVIALISSSQLVASHTRGNIQEVAARGAHVLTVVEEGLDREGDDIIVNKVHPFLAPIAMVIPTQLIAYYASLQRGLDVDKPRNLAKAVTVE.

The Nucleophile; for GATase activity role is filled by Cys2. One can recognise a Glutamine amidotransferase type-2 domain in the interval Cys2–Asp218. 2 consecutive SIS domains span residues Ile284–Lys423 and Val456–Pro594. The active-site For Fru-6P isomerization activity is the Lys599.

As to quaternary structure, homodimer.

It localises to the cytoplasm. The enzyme catalyses D-fructose 6-phosphate + L-glutamine = D-glucosamine 6-phosphate + L-glutamate. In terms of biological role, catalyzes the first step in hexosamine metabolism, converting fructose-6P into glucosamine-6P using glutamine as a nitrogen source. The sequence is that of Glutamine--fructose-6-phosphate aminotransferase [isomerizing] from Streptococcus pyogenes serotype M1.